The sequence spans 337 residues: Tetraacyldisaccharide 4'-kinase (337 aa).

Residue 58–65 (TVGGSGKT) coordinates ATP.

This sequence belongs to the LpxK family.

It catalyses the reaction a lipid A disaccharide + ATP = a lipid IVA + ADP + H(+). Its pathway is glycolipid biosynthesis; lipid IV(A) biosynthesis; lipid IV(A) from (3R)-3-hydroxytetradecanoyl-[acyl-carrier-protein] and UDP-N-acetyl-alpha-D-glucosamine: step 6/6. Transfers the gamma-phosphate of ATP to the 4'-position of a tetraacyldisaccharide 1-phosphate intermediate (termed DS-1-P) to form tetraacyldisaccharide 1,4'-bis-phosphate (lipid IVA). The chain is Tetraacyldisaccharide 4'-kinase from Shewanella putrefaciens (strain CN-32 / ATCC BAA-453).